Reading from the N-terminus, the 651-residue chain is PTS system sucrose-specific EIIBCA component (651 aa).

The PTS EIIB type-1 domain occupies 3 to 86; it reads HQEVADRVLN…IVKTGLKEVT (84 aa). The active-site Phosphocysteine intermediate; for EIIB activity is Cys-25. Transmembrane regions (helical) follow at residues 109–129, 158–178, 182–202, 204–224, 226–246, 264–284, 303–323, 345–365, 404–424, and 444–464; these read VLSDIFIPIVPALVAGGLLMA, MINAMASAPFTFLPILLGFSA, FGGNPYLGATMGMIMVLPSLV, GYSVATTMAAGKMVYWNVFGL, VAQAGYQGQVLPVLGVAFILA, FTPMFAIVITGFLTFTIVGPV, TGWIGMGIFGLLYSAIVITGL, FIFPVASMANIGQGAATLAIF, FVFAAIASGIASAFLGLFHVL, and IPAFMLSAVISFVVAFIPTFI. Residues 121–481 enclose the PTS EIIC type-1 domain; it reads LVAGGLLMAL…DDRDQVKSPA (361 aa). One can recognise a PTS EIIA type-1 domain in the interval 510–614; sequence DQVFSAEIMG…DPTVMLIVTN (105 aa). The active-site Tele-phosphohistidine intermediate; for EIIA activity is the His-562.

It localises to the cell membrane. The catalysed reaction is N(pros)-phospho-L-histidyl-[protein](out) + sucrose = sucrose 6(G)-phosphate(in) + L-histidyl-[protein]. Its function is as follows. The phosphoenolpyruvate-dependent sugar phosphotransferase system (sugar PTS), a major carbohydrate active transport system, catalyzes the phosphorylation of incoming sugar substrates concomitantly with their translocation across the cell membrane. This system is involved in sucrose transport. This Pediococcus pentosaceus protein is PTS system sucrose-specific EIIBCA component (scrA).